Here is a 274-residue protein sequence, read N- to C-terminus: Large ribosomal subunit protein uL2cz/uL2cy (274 aa).

Disordered regions lie at residues Met1–Val22 and Pro225–Ala252.

Belongs to the universal ribosomal protein uL2 family. As to quaternary structure, part of the 50S ribosomal subunit.

The protein localises to the plastid. It localises to the chloroplast. This chain is Large ribosomal subunit protein uL2cz/uL2cy (rpl2-A), found in Barbarea verna (Land cress).